A 386-amino-acid chain; its full sequence is Trichocyst matrix protein T2-B (386 aa).

The signal sequence occupies residues 1-19 (MKTIILALALIALVSSTQS). Positions 20 to 48 (DVIDTIKKIDQSPFGRTLFDTIWLELQTG) are excised as a propeptide. A coiled-coil region spans residues 51 to 154 (LDRLVSTLTD…AEEHEDFEEK (104 aa)). Positions 184 to 238 (KGKAAKQPHKFTKDVANLIQKHFTTSAKKTAKFQHRKGYSKLFKAFATIASKVEQ) are excised as a propeptide. The stretch at 294-325 (ALANAISDLAALNDIIAQVEASLDTTVQRIEN) forms a coiled coil.

This sequence belongs to the TMP family.

It is found in the trichocyst. Structural protein that crystallize inside the trichocyst matrix. This chain is Trichocyst matrix protein T2-B (T2B), found in Paramecium tetraurelia.